Reading from the N-terminus, the 497-residue chain is Validamine 7-phosphate valienyltransferase (497 aa).

D158 serves as a coordination point for GDP-valienol. H182 is a binding site for validamine 7-phosphate. GDP-valienol contacts are provided by residues R290, K295, R321, 325–326, 361–362, and T366; these read NR and ND. 383-386 contributes to the validamine 7-phosphate binding site; the sequence is DGQN. Residues 387 to 388 and E391 each bind GDP-valienol; that span reads LS.

It belongs to the glycosyltransferase 20 family. In terms of assembly, homodimer.

The catalysed reaction is validamine 7-phosphate + GDP-valienol = validoxylamine A 7'-phosphate + GDP + H(+). Its function is as follows. Involved in the biosynthesis of the antifungal agent validamycin A. Catalyzes the condensation between GDP-valienol and validamine 7-phosphate via a nonglycosidic C-N bond formation to yield validoxylamine A 7'-phosphate. In Streptomyces hygroscopicus subsp. limoneus, this protein is Validamine 7-phosphate valienyltransferase.